We begin with the raw amino-acid sequence, 89 residues long: Conotoxin Bu5 (89 aa).

The N-terminal stretch at 1 to 22 (MKLTCVLIVAVLFLTACQLATA) is a signal peptide. The propeptide occupies 23-49 (ENSREEQGYSAVRSSDQIQDSDLKLTK). 3 cysteine pairs are disulfide-bonded: C51-C66, C58-C70, and C65-C79. A Cysteine amide modification is found at C79. The propeptide occupies 80–89 (GVSIDYYDSR).

Belongs to the conotoxin O1 superfamily. Expressed by the venom duct.

Its subcellular location is the secreted. The protein is Conotoxin Bu5 of Conus bullatus (Bubble cone).